Consider the following 483-residue polypeptide: UDP-glycosyltransferase 85C1 (483 aa).

UDP-alpha-D-glucose-binding positions include serine 304, 360 to 361 (WC), 378 to 386 (HCGWGSIIE), and 400 to 403 (IGDQ).

It belongs to the UDP-glycosyltransferase family.

Functionally, may glycosylate diterpenes or flavonols in leaves. This chain is UDP-glycosyltransferase 85C1, found in Stevia rebaudiana (Stevia).